The sequence spans 506 residues: MAEFKRYLELDISQQHDFIYPLIFQEYIYALAHDRGLNRSIFLENAGYDNKSSLLIVKRLITHLITQMYQQNHFFFSVSDSNQKKNLGYNTNFYSQMIFEGFAVVMEIPFYLRLLSFLEGKERVKSHNLRSIHSIFPFLEDKFTYQNYVLDIQIPHPIHPEILVQTLRYWVKDASSLHLLRFFLHEYPIWNSLITQKKSIFYFSKKNQRFFLFLYNFHVCEYESIFVFLRNQSSYLRSISSETFLERISFYRKIEREVFTKDFKAILWLFKEPFLHYVRYRGKAILASKGTSLLMNKWKYYLLNFWQSYFYMWSQPRRIHINQLSNHSLDFLGYLSSVRLKPLMLRSQMIENSFLIENASKKFDTLMPITTMILSLYKAKFCNVVGHPMSKPAWAALSDSDIIERFRALYRNLSHYYSGSLKKISLYRIKYILRLSCARTLARKHKSTVRAFLKRLGVGLLEEFFTEEEQVFYLTFQKVSFTSGELYRRRIWYLDIICINDLANYE.

This sequence belongs to the intron maturase 2 family. MatK subfamily.

The protein localises to the plastid. The protein resides in the chloroplast. Usually encoded in the trnK tRNA gene intron. Probably assists in splicing its own and other chloroplast group II introns. The chain is Maturase K from Phyllodoce empetriformis (Pink mountainheath).